Here is a 477-residue protein sequence, read N- to C-terminus: Bifunctional protein HldE (477 aa).

Residues M1–E318 form a ribokinase region. Position 194–197 (N194–E197) interacts with ATP. Residue D263 is part of the active site. Residues F343–E477 are cytidylyltransferase.

In the N-terminal section; belongs to the carbohydrate kinase PfkB family. The protein in the C-terminal section; belongs to the cytidylyltransferase family. Homodimer.

It catalyses the reaction D-glycero-beta-D-manno-heptose 7-phosphate + ATP = D-glycero-beta-D-manno-heptose 1,7-bisphosphate + ADP + H(+). It carries out the reaction D-glycero-beta-D-manno-heptose 1-phosphate + ATP + H(+) = ADP-D-glycero-beta-D-manno-heptose + diphosphate. It participates in nucleotide-sugar biosynthesis; ADP-L-glycero-beta-D-manno-heptose biosynthesis; ADP-L-glycero-beta-D-manno-heptose from D-glycero-beta-D-manno-heptose 7-phosphate: step 1/4. It functions in the pathway nucleotide-sugar biosynthesis; ADP-L-glycero-beta-D-manno-heptose biosynthesis; ADP-L-glycero-beta-D-manno-heptose from D-glycero-beta-D-manno-heptose 7-phosphate: step 3/4. Its function is as follows. Catalyzes the phosphorylation of D-glycero-D-manno-heptose 7-phosphate at the C-1 position to selectively form D-glycero-beta-D-manno-heptose-1,7-bisphosphate. In terms of biological role, catalyzes the ADP transfer from ATP to D-glycero-beta-D-manno-heptose 1-phosphate, yielding ADP-D-glycero-beta-D-manno-heptose. In Pseudomonas fluorescens (strain ATCC BAA-477 / NRRL B-23932 / Pf-5), this protein is Bifunctional protein HldE.